A 152-amino-acid polypeptide reads, in one-letter code: Snaclec anticoagulant protein subunit A (152 aa).

Positions 1–23 are cleaved as a signal peptide; that stretch reads MGRFIFVSFGLLVVYLSLSGTAA. The 129-residue stretch at 24-152 folds into the C-type lectin domain; the sequence is DCSSSWSSYE…EQRDPFVCEA (129 aa). Intrachain disulfides connect cysteine 25–cysteine 36, cysteine 53–cysteine 150, and cysteine 125–cysteine 142. Ca(2+)-binding residues include serine 64, glutamate 66, and glutamate 70. Glutamate 151 is a binding site for Ca(2+).

It belongs to the snaclec family. As to quaternary structure, heterodimer of subunits A and B; disulfide-linked. In terms of tissue distribution, expressed by the venom gland.

The protein resides in the secreted. In terms of biological role, anticoagulant protein which binds to the gamma-carboxyglutamic acid-domain regions of factors IX and factor X in the presence of calcium with a 1 to 1 stoichiometry. Also inhibits platelet aggregation by binding to platelet glycoprotein Ibalpha (GP1BA) and functioning as a blocker of vWF. Is devoid of hemorrhagic and lethal activities. Possesses antithrombotic and thrombolytic activities. Also hydrolyzes the Aalpha-chain of fibrinogen. Does not affect the Bbeta-chain and the gamma chain. In Deinagkistrodon acutus (Hundred-pace snake), this protein is Snaclec anticoagulant protein subunit A.